The chain runs to 293 residues: Glutamine sensor pib2 (293 aa).

Positions 38–75 (APTRQATNGTGSVSGSPNSSSNSTPANQGSLPSHTNPQ) are disordered. A compositionally biased stretch (low complexity) spans 44 to 62 (TNGTGSVSGSPNSSSNSTP). Residues 63–75 (ANQGSLPSHTNPQ) are compositionally biased toward polar residues. Residues 156-220 (DVSVCSFPSC…SCVSCFYEYL (65 aa)) form an FYVE-type; degenerate zinc finger. The Zn(2+) site is built by cysteine 178, cysteine 181, cysteine 212, and cysteine 215. A compositionally biased stretch (polar residues) spans 242-256 (APQQATTHPPSQPKN). The segment at 242 to 276 (APQQATTHPPSQPKNAVSVPIPKMDSTDSKGELPS) is disordered. Serine 259 is subject to Phosphoserine.

As to quaternary structure, interacts with the TORC1 complex when activated by glutamine or cysteine.

The protein resides in the vacuole membrane. Its activity is regulated as follows. Activated by glutamine. In terms of biological role, functions as an intracellular glutamine sensor that directly activates the TORC1 signaling pathway, to promote cell growth when glutamine is available. The protein is Glutamine sensor pib2 of Schizosaccharomyces pombe (strain 972 / ATCC 24843) (Fission yeast).